Reading from the N-terminus, the 363-residue chain is Carbamoyl phosphate synthase small chain (363 aa).

The segment at 1-171 (MEDGTLFAGA…PYRIPGPGPR (171 aa)) is CPSase. The L-glutamine site is built by Ser-39, Gly-219, and Gly-221. Positions 171–359 (RVVAVDFGAK…LALVDRSAVS (189 aa)) constitute a Glutamine amidotransferase type-1 domain. Residue Cys-248 is the Nucleophile of the active site. L-glutamine contacts are provided by Leu-249, Gln-252, Asn-290, Gly-292, and Tyr-293. Catalysis depends on residues His-332 and Glu-334.

Belongs to the CarA family. As to quaternary structure, composed of two chains; the small (or glutamine) chain promotes the hydrolysis of glutamine to ammonia, which is used by the large (or ammonia) chain to synthesize carbamoyl phosphate. Tetramer of heterodimers (alpha,beta)4.

The enzyme catalyses hydrogencarbonate + L-glutamine + 2 ATP + H2O = carbamoyl phosphate + L-glutamate + 2 ADP + phosphate + 2 H(+). The catalysed reaction is L-glutamine + H2O = L-glutamate + NH4(+). Its pathway is amino-acid biosynthesis; L-arginine biosynthesis; carbamoyl phosphate from bicarbonate: step 1/1. It participates in pyrimidine metabolism; UMP biosynthesis via de novo pathway; (S)-dihydroorotate from bicarbonate: step 1/3. Small subunit of the glutamine-dependent carbamoyl phosphate synthetase (CPSase). CPSase catalyzes the formation of carbamoyl phosphate from the ammonia moiety of glutamine, carbonate, and phosphate donated by ATP, constituting the first step of 2 biosynthetic pathways, one leading to arginine and/or urea and the other to pyrimidine nucleotides. The small subunit (glutamine amidotransferase) binds and cleaves glutamine to supply the large subunit with the substrate ammonia. This Symbiobacterium thermophilum (strain DSM 24528 / JCM 14929 / IAM 14863 / T) protein is Carbamoyl phosphate synthase small chain.